We begin with the raw amino-acid sequence, 639 residues long: Complex I assembly factor Egm, mitochondrial (639 aa).

The N-terminal 26 residues, 1-26 (MRPNLFSGASRLLTYSRNGKLLTRGR), are a transit peptide targeting the mitochondrion. The segment at 23–65 (TRGRSTKATSSSLDSQHQDAATTEGGRAESVEESPEQQRKLPT) is disordered. Residues 28 to 43 (TKATSSSLDSQHQDAA) show a composition bias toward polar residues. A compositionally biased stretch (basic and acidic residues) spans 48–65 (GRAESVEESPEQQRKLPT).

Belongs to the acyl-CoA dehydrogenase family. In terms of assembly, associates with mitochondrial complex I assembly intermediates during its biogenesis. FAD is required as a cofactor.

Its subcellular location is the mitochondrion. Its function is as follows. As part of the MCIA complex, primarily participates in the assembly of the mitochondrial complex I and therefore plays a role in oxidative phosphorylation. The polypeptide is Complex I assembly factor Egm, mitochondrial (Drosophila melanogaster (Fruit fly)).